The following is a 166-amino-acid chain: Antibacterial peptide PMAP-36 (166 aa).

An N-terminal signal peptide occupies residues 1–29; the sequence is METQRASLCLGRWSLWLLLLGLVVPSASA. Positions 30 to 129 are excised as a propeptide; the sequence is QALSYREAVL…LDINCDEIQS (100 aa). Intrachain disulfides connect Cys-85–Cys-96 and Cys-107–Cys-124.

This sequence belongs to the cathelicidin family.

It localises to the secreted. Functionally, exerts antimicrobial activity against both Gram-positive and negative bacteria. Its activity appears to be mediated by its ability to damage bacterial membranes. In Sus scrofa (Pig), this protein is Antibacterial peptide PMAP-36 (PMAP36).